Here is a 241-residue protein sequence, read N- to C-terminus: 7-cyano-7-deazaguanine synthase (241 aa).

15–25 (FSGGQDSTTTL) contacts ATP. Zn(2+)-binding residues include cysteine 203, cysteine 218, cysteine 221, and cysteine 224.

Belongs to the QueC family. Requires Zn(2+) as cofactor.

It catalyses the reaction 7-carboxy-7-deazaguanine + NH4(+) + ATP = 7-cyano-7-deazaguanine + ADP + phosphate + H2O + H(+). Its pathway is purine metabolism; 7-cyano-7-deazaguanine biosynthesis. Functionally, catalyzes the ATP-dependent conversion of 7-carboxy-7-deazaguanine (CDG) to 7-cyano-7-deazaguanine (preQ(0)). This chain is 7-cyano-7-deazaguanine synthase, found in Azorhizobium caulinodans (strain ATCC 43989 / DSM 5975 / JCM 20966 / LMG 6465 / NBRC 14845 / NCIMB 13405 / ORS 571).